The sequence spans 172 residues: Thioredoxin M-type, chloroplastic (172 aa).

A chloroplast-targeting transit peptide spans 1–60 (MALESLFKSIHTKTSLSSSIVFIFKGKACLLTSKSRIQESFAELNSFTSLVLLIENHVLL). Residues 61–172 (HAREAVNEVQ…TLSEKVEKYI (112 aa)) form the Thioredoxin domain. Active-site nucleophile residues include cysteine 97 and cysteine 100. Cysteine 97 and cysteine 100 are oxidised to a cystine.

The protein belongs to the thioredoxin family. Plant M-type subfamily. As to quaternary structure, forms a complex with heterodimeric ferredoxin-thioredoxin reductase (FTR) and ferredoxin.

It is found in the plastid. It localises to the chloroplast. Participates in various redox reactions through the reversible oxidation of the active center dithiol to a disulfide. The M form is known to activate NADP-malate dehydrogenase. This chain is Thioredoxin M-type, chloroplastic, found in Pisum sativum (Garden pea).